Here is a 1058-residue protein sequence, read N- to C-terminus: COP1-interacting protein 7 (1058 aa).

Disordered regions lie at residues 123 to 147, 262 to 281, and 330 to 463; these read LGGT…GDTV, HGNS…QEGR, and MGDV…GNDN. 2 stretches are compositionally biased toward polar residues: residues 126–136 and 262–276; these read TWTSQKSTALS and HGNS…SFET. The short motif at 340-347 is the Nuclear localization signal 1 element; that stretch reads SKKKKKKK. A compositionally biased stretch (basic residues) spans 340–353; the sequence is SKKKKKKKKNKKKS. Residues 403–414 are compositionally biased toward acidic residues; sequence DSDESGEEEGFV. The short motif at 431–438 is the Nuclear localization signal 2 element; it reads ERRHKSTS. Residues 432–446 show a composition bias toward basic residues; sequence RRHKSTSHRQRKHKS. Basic and acidic residues predominate over residues 447-462; the sequence is HNGDDDSSNKETKGND. Serine 477 is subject to Phosphoserine. The interval 708 to 887 is disordered; the sequence is AGEQTLDGKE…KSVELSRDPS (180 aa). Residues 757–773 show a composition bias toward basic and acidic residues; sequence SKSEMEEERKKRMEELL. Positions 764–771 match the Nuclear localization signal 3 motif; sequence ERKKRMEE. Residues 783-808 show a composition bias toward low complexity; that stretch reads KSSGGSVSSSLASKKTPTVTKSVKSS. Basic and acidic residues-rich tracts occupy residues 860 to 869 and 878 to 887; these read KTEKAQEKKS and KSVELSRDPS. 3 positions are modified to phosphoserine: serine 915, serine 986, and serine 992. Residues 1020–1041 are disordered; sequence STPPATEADHSRKKWNSEETSP. Positions 1026 to 1040 are enriched in basic and acidic residues; sequence EADHSRKKWNSEETS.

In terms of assembly, interacts with COP1.

Its subcellular location is the nucleus. In terms of biological role, exhibits transcriptional activation activity. Positive regulator of light-regulated genes, probably being a direct downstream target of COP1 for mediating light control of gene expression. The sequence is that of COP1-interacting protein 7 from Arabidopsis thaliana (Mouse-ear cress).